The chain runs to 251 residues: Triosephosphate isomerase (251 aa).

9–11 (NWK) is a binding site for substrate. The active-site Electrophile is the histidine 95. Glutamate 167 acts as the Proton acceptor in catalysis. Substrate-binding positions include glycine 173, serine 212, and 233–234 (GG).

Belongs to the triosephosphate isomerase family. In terms of assembly, homodimer.

The protein localises to the cytoplasm. The catalysed reaction is D-glyceraldehyde 3-phosphate = dihydroxyacetone phosphate. It functions in the pathway carbohydrate biosynthesis; gluconeogenesis. Its pathway is carbohydrate degradation; glycolysis; D-glyceraldehyde 3-phosphate from glycerone phosphate: step 1/1. Involved in the gluconeogenesis. Catalyzes stereospecifically the conversion of dihydroxyacetone phosphate (DHAP) to D-glyceraldehyde-3-phosphate (G3P). The polypeptide is Triosephosphate isomerase (Pseudomonas paraeruginosa (strain DSM 24068 / PA7) (Pseudomonas aeruginosa (strain PA7))).